The primary structure comprises 287 residues: L-ascorbate peroxidase 3 (287 aa).

Residue Ala-2 is modified to N-acetylalanine. His-40 serves as the catalytic Proton acceptor. Residues 46–66 are disordered; that stretch reads DAQSKTGGPNGSIRNEEEHTH. His-160 lines the heme b pocket. The K(+) site is built by Thr-161, Thr-177, and Asp-184. Residues 259–279 traverse the membrane as a helical segment; it reads ILAQSAFGVAVAAAVVAFGYF. Positions 281 to 287 match the AKR2A-binding sequence (ABS) required for peroxisome membrane targeting motif; it reads EIRKRMK.

It belongs to the peroxidase family. Ascorbate peroxidase subfamily. Interacts via its C-terminal region with AKR2A and AKR2B. Requires heme b as cofactor.

The protein resides in the peroxisome membrane. It localises to the glyoxysome membrane. It carries out the reaction L-ascorbate + H2O2 = L-dehydroascorbate + 2 H2O. Functionally, plays a key role in hydrogen peroxide removal. This chain is L-ascorbate peroxidase 3 (APX3), found in Arabidopsis thaliana (Mouse-ear cress).